A 282-amino-acid chain; its full sequence is Pantothenate synthetase (282 aa).

Residue 30–37 participates in ATP binding; that stretch reads MGYLHEGH. The Proton donor role is filled by H37. Residue Q61 coordinates (R)-pantoate. Q61 is a binding site for beta-alanine. 147-150 contributes to the ATP binding site; that stretch reads GMKD. Residue Q153 coordinates (R)-pantoate. ATP-binding positions include V176 and 184-187; that span reads KSSR.

The protein belongs to the pantothenate synthetase family. Homodimer.

The protein localises to the cytoplasm. It carries out the reaction (R)-pantoate + beta-alanine + ATP = (R)-pantothenate + AMP + diphosphate + H(+). Its pathway is cofactor biosynthesis; (R)-pantothenate biosynthesis; (R)-pantothenate from (R)-pantoate and beta-alanine: step 1/1. Its function is as follows. Catalyzes the condensation of pantoate with beta-alanine in an ATP-dependent reaction via a pantoyl-adenylate intermediate. The polypeptide is Pantothenate synthetase (Bacillus anthracis (strain A0248)).